The primary structure comprises 368 residues: Glutamate 5-kinase (368 aa).

Lysine 9 contacts ATP. 3 residues coordinate substrate: serine 49, aspartate 136, and asparagine 148. Residues 168–169 and 210–216 each bind ATP; these read TD and TGGMMTK. One can recognise a PUA domain in the interval 275-353; sequence AGIITIDDGA…ADIENVLGYE (79 aa).

Belongs to the glutamate 5-kinase family.

It is found in the cytoplasm. The enzyme catalyses L-glutamate + ATP = L-glutamyl 5-phosphate + ADP. It participates in amino-acid biosynthesis; L-proline biosynthesis; L-glutamate 5-semialdehyde from L-glutamate: step 1/2. Catalyzes the transfer of a phosphate group to glutamate to form L-glutamate 5-phosphate. This chain is Glutamate 5-kinase, found in Haemophilus influenzae (strain 86-028NP).